A 176-amino-acid polypeptide reads, in one-letter code: Cytochrome b561 homolog 1 (176 aa).

Over 1–7 (MNRFSKT) the chain is Cytoplasmic. A helical transmembrane segment spans residues 8-28 (QIYLHWITLLFVAITYAAMEL). Histidine 12 contributes to the heme b binding site. Residues 29–45 (RGWFPKGSSTYLLMRET) are Periplasmic-facing. A heme b-binding site is contributed by histidine 46. Residues 46-63 (HYNAGIFVWVLMFSRLII) form a helical membrane-spanning segment. The Cytoplasmic segment spans residues 64-85 (KHRYSDPSIVPPPPAWQMKAAS). The chain crosses the membrane as a helical span at residues 86-106 (LMHIMLYITFLALPLLGIALM). Topologically, residues 107-141 (AYSGKSWSFLGFNVSPFVTPNSEIKALIKNIHETW) are periplasmic. Heme b-binding residues include histidine 138 and histidine 152. The helical transmembrane segment at 142–162 (ANIGYFLIAAHAGAALFHHYI) threads the bilayer. Over 163-176 (QKDNTLLRMMPRRK) the chain is Cytoplasmic.

This sequence belongs to the cytochrome b561 family. Heme b is required as a cofactor.

The protein localises to the cell inner membrane. In Escherichia coli (strain K12), this protein is Cytochrome b561 homolog 1 (yodB).